Reading from the N-terminus, the 79-residue chain is MATKKEDVKFEDNLAELENIVRKLESGDVALEDAIAEFQKGMKISETLKKTLNEAEETLVKIVGKNDQESDFSPEQKDY.

It belongs to the XseB family. In terms of assembly, heterooligomer composed of large and small subunits.

The protein resides in the cytoplasm. It carries out the reaction Exonucleolytic cleavage in either 5'- to 3'- or 3'- to 5'-direction to yield nucleoside 5'-phosphates.. In terms of biological role, bidirectionally degrades single-stranded DNA into large acid-insoluble oligonucleotides, which are then degraded further into small acid-soluble oligonucleotides. This is Exodeoxyribonuclease 7 small subunit from Lactococcus lactis subsp. lactis (strain IL1403) (Streptococcus lactis).